A 555-amino-acid polypeptide reads, in one-letter code: uncharacterized protein (555 aa).

ABC transporter domains are found at residues 4 to 244 (VKVK…PPYK) and 255 to 547 (IQVR…ARFM). ATP-binding positions include 36–43 (GKSGAGKS) and 292–299 (GPSGVGKT).

It belongs to the ABC transporter superfamily.

This is an uncharacterized protein from Methanocaldococcus jannaschii (strain ATCC 43067 / DSM 2661 / JAL-1 / JCM 10045 / NBRC 100440) (Methanococcus jannaschii).